We begin with the raw amino-acid sequence, 338 residues long: UPF0324 membrane protein NMA0465 (338 aa).

10 helical membrane passes run 5-23 (PFYF…ANYL), 33-55 (HISA…YPQF), 62-84 (GVLF…RLTF), 94-116 (AVVT…GIRY), 123-145 (LVYL…AESV), 155-177 (VAIA…FYTW), 222-239 (IRVM…WLLT), 254-273 (IPWF…FDLL), 280-302 (LFVE…TTHA), and 312-334 (PFVL…NYGI).

It belongs to the UPF0324 family.

It is found in the cell membrane. This is UPF0324 membrane protein NMA0465 from Neisseria meningitidis serogroup A / serotype 4A (strain DSM 15465 / Z2491).